Reading from the N-terminus, the 286-residue chain is L-cysteine S-thiosulfotransferase subunit SoxA (286 aa).

An N-terminal signal peptide occupies residues Met1–Ala27. Residues Cys106 and Cys137 are joined by a disulfide bond. One can recognise a Cytochrome c domain in the interval Asp180–Lys286. Residues Cys200 and His204 each coordinate heme. Arg243 is a substrate binding site. Residue Cys247 participates in heme binding. The active-site Cysteine persulfide intermediate is the Cys247.

This sequence belongs to the SoxA family. Heterodimer of SoxA and SoxX. The SoxAX complex interacts with CT1020, SoxAX-binding protein SaxB (SoxK); this interaction seems to be between SoxA and CT1020 and stimulates catalytic activity of the SoxAX complex. Heme serves as cofactor. Cysteine persulfide at Cys-247.

The protein localises to the periplasm. It catalyses the reaction L-cysteinyl-[SoxY protein] + thiosulfate + 2 Fe(III)-[cytochrome c] = S-sulfosulfanyl-L-cysteinyl-[SoxY protein] + 2 Fe(II)-[cytochrome c] + 2 H(+). The catalysed reaction is S-sulfanyl-L-cysteinyl-[SoxY protein] + thiosulfate + 2 Fe(III)-[cytochrome c] = S-(2-sulfodisulfanyl)-L-cysteinyl-[SoxY protein] + 2 Fe(II)-[cytochrome c] + 2 H(+). Functionally, C-type monoheme cytochrome, which is part of the SoxAX cytochrome complex involved in sulfur oxidation. The SoxAX complex catalyzes the formation of a heterodisulfide bond between the conserved cysteine residue on a sulfur carrier SoxYZ complex subunit SoxY and thiosulfate or other inorganic sulfur substrates. This leads to the liberation of two electrons, which may be transferred from the SoxAX complex to another cytochrome c and which then may be used for reductive CO(2) fixation. The sequence is that of L-cysteine S-thiosulfotransferase subunit SoxA from Chlorobaculum tepidum (strain ATCC 49652 / DSM 12025 / NBRC 103806 / TLS) (Chlorobium tepidum).